The sequence spans 382 residues: ATP phosphoribosyltransferase regulatory subunit (382 aa).

This sequence belongs to the class-II aminoacyl-tRNA synthetase family. HisZ subfamily. Heteromultimer composed of HisG and HisZ subunits.

The protein resides in the cytoplasm. Its pathway is amino-acid biosynthesis; L-histidine biosynthesis; L-histidine from 5-phospho-alpha-D-ribose 1-diphosphate: step 1/9. Required for the first step of histidine biosynthesis. May allow the feedback regulation of ATP phosphoribosyltransferase activity by histidine. This is ATP phosphoribosyltransferase regulatory subunit from Verminephrobacter eiseniae (strain EF01-2).